Reading from the N-terminus, the 437-residue chain is tRNA-2-methylthio-N(6)-dimethylallyladenosine synthase (437 aa).

The MTTase N-terminal domain maps to 3–120 (RKLFIETHGC…LPEMIDAART (118 aa)). [4Fe-4S] cluster is bound by residues C12, C49, C83, C157, C161, and C164. A Radical SAM core domain is found at 143-370 (RVDGPSAYVS…QQRINQQGFE (228 aa)). A TRAM domain is found at 373 to 437 (RRMVGTTQRI…PHSLRGSLLS (65 aa)).

The protein belongs to the methylthiotransferase family. MiaB subfamily. In terms of assembly, monomer. [4Fe-4S] cluster is required as a cofactor.

Its subcellular location is the cytoplasm. It catalyses the reaction N(6)-dimethylallyladenosine(37) in tRNA + (sulfur carrier)-SH + AH2 + 2 S-adenosyl-L-methionine = 2-methylsulfanyl-N(6)-dimethylallyladenosine(37) in tRNA + (sulfur carrier)-H + 5'-deoxyadenosine + L-methionine + A + S-adenosyl-L-homocysteine + 2 H(+). In terms of biological role, catalyzes the methylthiolation of N6-(dimethylallyl)adenosine (i(6)A), leading to the formation of 2-methylthio-N6-(dimethylallyl)adenosine (ms(2)i(6)A) at position 37 in tRNAs that read codons beginning with uridine. This chain is tRNA-2-methylthio-N(6)-dimethylallyladenosine synthase, found in Stutzerimonas stutzeri (strain A1501) (Pseudomonas stutzeri).